A 134-amino-acid polypeptide reads, in one-letter code: Small ribosomal subunit protein uS11 (134 aa).

Disordered stretches follow at residues 1–22 and 114–134; these read MPPK…KNVA and SIQD…RRRV. Residues 9 to 22 show a composition bias toward basic residues; the sequence is AAKKVRRKEKKNVA.

Belongs to the universal ribosomal protein uS11 family. Part of the 30S ribosomal subunit. Interacts with proteins S7 and S18. Binds to IF-3.

Functionally, located on the platform of the 30S subunit, it bridges several disparate RNA helices of the 16S rRNA. Forms part of the Shine-Dalgarno cleft in the 70S ribosome. The polypeptide is Small ribosomal subunit protein uS11 (Streptomyces coelicolor (strain ATCC BAA-471 / A3(2) / M145)).